A 501-amino-acid chain; its full sequence is Probable cytochrome P450 28d2 (501 aa).

Cys446 contacts heme.

The protein belongs to the cytochrome P450 family. Heme serves as cofactor.

The protein resides in the endoplasmic reticulum membrane. It localises to the microsome membrane. May be involved in the metabolism of insect hormones and in the breakdown of synthetic insecticides. In Drosophila melanogaster (Fruit fly), this protein is Probable cytochrome P450 28d2 (Cyp28d2).